The primary structure comprises 908 residues: Flap endonuclease GEN homolog 1 (908 aa).

The interval 2 to 96 is XPG-N domain; the sequence is GVNDLWQILE…SKRNQSRYGS (95 aa). 7 residues coordinate Mg(2+): Asp-30, Glu-75, Glu-134, Glu-136, Asp-155, Asp-157, and Asp-208. Positions 122–208 are XPG-I domain; sequence ECLGIPWVQA…VGLAILLGCD (87 aa). Residues 208 to 384 form a 5'-3' exonuclease domain region; sequence DYLPKGVPGV…LLVLLTHYDM (177 aa). Residues 390–464 are chromodomain; it reads GSRNSNQLQP…VYQKQKLEIK (75 aa). Phosphoserine is present on residues Ser-801 and Ser-802.

This sequence belongs to the XPG/RAD2 endonuclease family. GEN subfamily. As to quaternary structure, largely monomeric, dimerizes on the Holliday junction and the first nick occurs upon dimerization at the junction. It depends on Mg(2+) as a cofactor.

It localises to the nucleus. Its function is as follows. Endonuclease which resolves Holliday junctions (HJs) by the introduction of symmetrically related cuts across the junction point, to produce nicked duplex products in which the nicks can be readily ligated. Four-way DNA intermediates, also known as Holliday junctions, are formed during homologous recombination and DNA repair, and their resolution is necessary for proper chromosome segregation. Cleaves HJs by a nick and counter-nick mechanism involving dual coordinated incisions that lead to the formation of ligatable nicked duplex products. Cleavage of the first strand is rate limiting, while second strand cleavage is rapid. Largely monomeric, dimerizes on the HJ and the first nick occurs upon dimerization at the junction. Efficiently cleaves both single and double HJs contained within large recombination intermediates. Exhibits a weak sequence preference for incision between two G residues that reside in a T-rich region of DNA. Also has endonuclease activity on 5'-flap and replication fork (RF) DNA substrates. This is Flap endonuclease GEN homolog 1 (GEN1) from Homo sapiens (Human).